We begin with the raw amino-acid sequence, 426 residues long: Enolase (426 aa).

Gln165 provides a ligand contact to (2R)-2-phosphoglycerate. Residue Glu209 is the Proton donor of the active site. Mg(2+) is bound by residues Asp244, Glu287, and Asp313. The (2R)-2-phosphoglycerate site is built by Lys338, Arg367, Ser368, and Lys389. Lys338 acts as the Proton acceptor in catalysis.

It belongs to the enolase family. Mg(2+) is required as a cofactor.

Its subcellular location is the cytoplasm. The protein resides in the secreted. It is found in the cell surface. It carries out the reaction (2R)-2-phosphoglycerate = phosphoenolpyruvate + H2O. It functions in the pathway carbohydrate degradation; glycolysis; pyruvate from D-glyceraldehyde 3-phosphate: step 4/5. In terms of biological role, catalyzes the reversible conversion of 2-phosphoglycerate (2-PG) into phosphoenolpyruvate (PEP). It is essential for the degradation of carbohydrates via glycolysis. This chain is Enolase, found in Methanococcus maripaludis (strain DSM 14266 / JCM 13030 / NBRC 101832 / S2 / LL).